Here is a 190-residue protein sequence, read N- to C-terminus: Vascular endothelial growth factor A (190 aa).

The N-terminal stretch at 1–26 (MNFLLSWVHWSLALLLYLHHAKWSQA) is a signal peptide. Cystine bridges form between cysteine 51–cysteine 93, cysteine 82–cysteine 127, and cysteine 86–cysteine 129. A glycan (N-linked (GlcNAc...) asparagine) is linked at asparagine 100.

It belongs to the PDGF/VEGF growth factor family. As to quaternary structure, homodimer; disulfide-linked. Also found as heterodimer with PGF. Interacts with NRP1. Interacts with BSG. Interacts with CD82; this interaction inhibits VEGFA-mediated signaling pathway.

It is found in the secreted. Growth factor active in angiogenesis, vasculogenesis and endothelial cell growth. Induces endothelial cell proliferation, promotes cell migration, inhibits apoptosis and induces permeabilization of blood vessels. Binds to the FLT1/VEGFR1 and KDR/VEGFR2 receptors, heparan sulfate and heparin. Binding to NRP1 receptor initiates a signaling pathway needed for motor neuron axon guidance and cell body migration, including for the caudal migration of facial motor neurons from rhombomere 4 to rhombomere 6 during embryonic development. Also binds the DEAR/FBXW7-AS1 receptor. This chain is Vascular endothelial growth factor A (VEGFA), found in Bos taurus (Bovine).